Consider the following 353-residue polypeptide: UPF0283 membrane protein YcjF (353 aa).

The segment covering 1–19 (MSEPLKPRIDFAEPLKEEP) has biased composition (basic and acidic residues). The disordered stretch occupies residues 1–35 (MSEPLKPRIDFAEPLKEEPTSAFKAQQTFSEAESR). Transmembrane regions (helical) follow at residues 70–90 (MVMG…VQWT), 100–120 (VALG…GSVV), and 213–233 (ESTL…FIAW).

It belongs to the UPF0283 family.

The protein resides in the cell inner membrane. The polypeptide is UPF0283 membrane protein YcjF (Salmonella paratyphi B (strain ATCC BAA-1250 / SPB7)).